The primary structure comprises 175 residues: uncharacterized protein (175 aa).

Positions 113–175 (AQLPRDSRGN…RTRSGGLERL (63 aa)) are disordered.

This is an uncharacterized protein from Bos taurus (Bovine).